A 261-amino-acid chain; its full sequence is Indole-3-glycerol phosphate synthase (261 aa).

It belongs to the TrpC family.

It carries out the reaction 1-(2-carboxyphenylamino)-1-deoxy-D-ribulose 5-phosphate + H(+) = (1S,2R)-1-C-(indol-3-yl)glycerol 3-phosphate + CO2 + H2O. It functions in the pathway amino-acid biosynthesis; L-tryptophan biosynthesis; L-tryptophan from chorismate: step 4/5. This is Indole-3-glycerol phosphate synthase from Campylobacter concisus (strain 13826).